Reading from the N-terminus, the 246-residue chain is tRNA pseudouridine synthase A (246 aa).

D52 functions as the Nucleophile in the catalytic mechanism. Residue Y111 participates in substrate binding.

The protein belongs to the tRNA pseudouridine synthase TruA family. Homodimer.

It catalyses the reaction uridine(38/39/40) in tRNA = pseudouridine(38/39/40) in tRNA. Functionally, formation of pseudouridine at positions 38, 39 and 40 in the anticodon stem and loop of transfer RNAs. The sequence is that of tRNA pseudouridine synthase A from Rhodopseudomonas palustris (strain BisA53).